The chain runs to 517 residues: 2-isopropylmalate synthase (517 aa).

The Pyruvate carboxyltransferase domain maps to 5 to 268; the sequence is IIIFDTTLRD…DTRINTQEIH (264 aa). Mn(2+)-binding residues include aspartate 14, histidine 202, histidine 204, and asparagine 238. The interval 393-517 is regulatory domain; it reads SLDVITSQTI…ADLKSHKISQ (125 aa).

Belongs to the alpha-IPM synthase/homocitrate synthase family. LeuA type 1 subfamily. In terms of assembly, homodimer. Mn(2+) is required as a cofactor.

It is found in the cytoplasm. It catalyses the reaction 3-methyl-2-oxobutanoate + acetyl-CoA + H2O = (2S)-2-isopropylmalate + CoA + H(+). Its pathway is amino-acid biosynthesis; L-leucine biosynthesis; L-leucine from 3-methyl-2-oxobutanoate: step 1/4. Catalyzes the condensation of the acetyl group of acetyl-CoA with 3-methyl-2-oxobutanoate (2-ketoisovalerate) to form 3-carboxy-3-hydroxy-4-methylpentanoate (2-isopropylmalate). The polypeptide is 2-isopropylmalate synthase (Histophilus somni (strain 2336) (Haemophilus somnus)).